Consider the following 163-residue polypeptide: Troponin C (163 aa).

Residue S1 is modified to N-acetylserine. EF-hand domains are found at residues 14–49 (EQISEFKMAFDMFDEDGGGDISTKELGTIMKRLGMS), 50–85 (ISREELQQMIDEVDEDASGTIDFEEFLEMMARAMQD), 90–125 (IPDDELRAAFRVLDKNGDGFIDKDEFRALASECAGD), and 127–162 (LTDDELLEFMMDYDGNRDGRFDYEEWKEIIQELKVR). The residue at position 20 (K20) is an N6,N6-dimethyllysine; alternate. Position 20 is an N6-methyllysine; alternate (K20). Positions 27, 29, 33, 38, 63, 65, 67, 69, 74, 103, 105, 107, and 114 each coordinate Ca(2+).

This sequence belongs to the troponin C family.

In terms of biological role, troponin is the central regulatory protein of striated muscle contraction. Tn consists of three components: Tn-I which is the inhibitor of actomyosin ATPase, Tn-T which contains the binding site for tropomyosin and Tn-C. The binding of calcium to Tn-C abolishes the inhibitory action of Tn on actin filaments. The sequence is that of Troponin C from Branchiostoma lanceolatum (Common lancelet).